A 132-amino-acid polypeptide reads, in one-letter code: MINDTIADMLTRIRNANLAKHQIVQVCSTKMTRNIIKVLQEEGFIYKFEEIGEDNNKYLLISLKYKGKRKKPVITSLKRISKPGLRVYANYKELPKVLGGIGIAIISTSKGVMSDYHARHYGLGGEILCYIW.

This sequence belongs to the universal ribosomal protein uS8 family. As to quaternary structure, part of the 30S ribosomal subunit.

Its subcellular location is the plastid. It is found in the chloroplast. Its function is as follows. One of the primary rRNA binding proteins, it binds directly to 16S rRNA central domain where it helps coordinate assembly of the platform of the 30S subunit. The polypeptide is Small ribosomal subunit protein uS8c (rps8) (Gracilaria tenuistipitata var. liui (Red alga)).